The primary structure comprises 592 residues: MKLLSVLSLSLVLSCTTLSAQKVYEISAFGLKANSSKNASPVLQKALAKIKAEYKEGEKVILRFPEGRYEFHEKGAAVREYYISNHDQTNPKKVGIALEDMKNLTLDGQGSEFVFHGRMLPVSLLRSENCLLKNFSIDFENPHIAQVKIVENDPQDGIVFEPAPWVDYRIAKDSIFEAYGEGWTMRHSWGIAFDGDTKHLVYNTSDIGCPTKGASEVAPRRIHAPGWKDARLVPGTVVAMRGWGRPTPGIFLSHDVNTTIENVKVHYAEGMGLLAQLCENITLEKFGVCLKGDADPRYFTTQADATHFSGCKGKIVSCNGLYEGMMDDAINVHGTYLKVVKRVDDRTLVGRYMHGQSWGFEWGCPGDEVQFIRSNTMELVGKQNKIISIRPYDKEQTEGAREFLITFQEPVDQVINEQSGFGIENLTWTPEVLFSGNVIRNNRARGSLFSTPRKTIVENNLFDHTSGAAILLCGDCNGWFETGACRHVIIRKNRFVNALTNLFQFTNAVISIYPEIPDLKGQQQYFHGGPEGGIVIEDNEFETFDAPILYAKSVDGLVFRNNTIKLNTEYKPFHPNRNRFWLERVTNVTIAE.

The signal sequence occupies residues 1-14 (MKLLSVLSLSLVLS). A lipid anchor (N-palmitoyl cysteine) is attached at Cys15. The S-diacylglycerol cysteine moiety is linked to residue Cys15. 3 PbH1 repeats span residues 429–451 (TPEV…LFST), 452–474 (PRKT…LLCG), and 485–538 (CRHV…VIED).

It belongs to the glycosyl hydrolase 110 family. B subfamily.

The protein resides in the cell membrane. The catalysed reaction is Hydrolysis of terminal, non-reducing branched (1-&gt;3)-alpha-D-galactosidic residues, producing free D-galactose.. It catalyses the reaction Hydrolysis of terminal, non-reducing linear (1-&gt;3)-alpha-D-galactosidic residues, producing free D-galactose.. The enzyme catalyses Hydrolysis of terminal, non-reducing alpha-D-galactose residues in alpha-D-galactosides, including galactose oligosaccharides, galactomannans and galactolipids.. Its function is as follows. Alpha-galactosidase. Removes both branched alpha-1,3-linked galactose residues of blood group B antigens and linear alpha-1,3-linked galactose structures. This chain is Alpha-1,3-galactosidase B (glaB1), found in Phocaeicola vulgatus (strain ATCC 8482 / DSM 1447 / JCM 5826 / CCUG 4940 / NBRC 14291 / NCTC 11154) (Bacteroides vulgatus).